Here is a 267-residue protein sequence, read N- to C-terminus: Cilia- and flagella-associated protein 300 (267 aa).

It belongs to the CFAP300 family. Interacts with DNAAF2.

Its subcellular location is the cytoplasm. It is found in the cytoskeleton. The protein resides in the cilium axoneme. Its function is as follows. Cilium- and flagellum-specific protein that plays a role in axonemal structure organization and motility. May play a role in outer and inner dynein arm assembly. The sequence is that of Cilia- and flagella-associated protein 300 from Bos taurus (Bovine).